A 158-amino-acid polypeptide reads, in one-letter code: 6,7-dimethyl-8-ribityllumazine synthase (158 aa).

Residues Phe18, Ser50–Asp52, and Ala74–Ile76 contribute to the 5-amino-6-(D-ribitylamino)uracil site. Glu79 to Thr80 serves as a coordination point for (2S)-2-hydroxy-3-oxobutyl phosphate. His82 serves as the catalytic Proton donor. Leu107 is a 5-amino-6-(D-ribitylamino)uracil binding site. Residue Arg122 coordinates (2S)-2-hydroxy-3-oxobutyl phosphate.

It belongs to the DMRL synthase family.

It catalyses the reaction (2S)-2-hydroxy-3-oxobutyl phosphate + 5-amino-6-(D-ribitylamino)uracil = 6,7-dimethyl-8-(1-D-ribityl)lumazine + phosphate + 2 H2O + H(+). It functions in the pathway cofactor biosynthesis; riboflavin biosynthesis; riboflavin from 2-hydroxy-3-oxobutyl phosphate and 5-amino-6-(D-ribitylamino)uracil: step 1/2. In terms of biological role, catalyzes the formation of 6,7-dimethyl-8-ribityllumazine by condensation of 5-amino-6-(D-ribitylamino)uracil with 3,4-dihydroxy-2-butanone 4-phosphate. This is the penultimate step in the biosynthesis of riboflavin. This chain is 6,7-dimethyl-8-ribityllumazine synthase, found in Sulfolobus acidocaldarius (strain ATCC 33909 / DSM 639 / JCM 8929 / NBRC 15157 / NCIMB 11770).